We begin with the raw amino-acid sequence, 394 residues long: Elongation factor Tu 1 (394 aa).

Positions 10–204 (KPHVNVGTIG…ALDSYIPEPQ (195 aa)) constitute a tr-type G domain. The tract at residues 19 to 26 (GHVDHGKT) is G1. Residue 19–26 (GHVDHGKT) participates in GTP binding. Threonine 26 is a binding site for Mg(2+). A G2 region spans residues 60–64 (GITIS). Positions 81–84 (DCPG) are G3. GTP-binding positions include 81-85 (DCPGH) and 136-139 (NKCD). Residues 136–139 (NKCD) form a G4 region. The interval 174–176 (SAL) is G5.

This sequence belongs to the TRAFAC class translation factor GTPase superfamily. Classic translation factor GTPase family. EF-Tu/EF-1A subfamily. In terms of assembly, monomer.

The protein localises to the cytoplasm. It carries out the reaction GTP + H2O = GDP + phosphate + H(+). GTP hydrolase that promotes the GTP-dependent binding of aminoacyl-tRNA to the A-site of ribosomes during protein biosynthesis. In Pseudoalteromonas translucida (strain TAC 125), this protein is Elongation factor Tu 1.